We begin with the raw amino-acid sequence, 72 residues long: Translational regulator CsrA (72 aa).

It belongs to the CsrA/RsmA family. In terms of assembly, homodimer; the beta-strands of each monomer intercalate to form a hydrophobic core, while the alpha-helices form wings that extend away from the core.

It is found in the cytoplasm. A translational regulator that binds mRNA to regulate translation initiation and/or mRNA stability. Usually binds in the 5'-UTR at or near the Shine-Dalgarno sequence preventing ribosome-binding, thus repressing translation. Its main target seems to be the major flagellin gene, while its function is anatagonized by FliW. The sequence is that of Translational regulator CsrA from Agathobacter rectalis (strain ATCC 33656 / DSM 3377 / JCM 17463 / KCTC 5835 / VPI 0990) (Eubacterium rectale).